Consider the following 73-residue polypeptide: Protein SlyX homolog (73 aa).

This sequence belongs to the SlyX family.

In Actinobacillus pleuropneumoniae serotype 5b (strain L20), this protein is Protein SlyX homolog.